The following is a 293-amino-acid chain: MGFPAAALLCALCCGLLAPAARAGYSEERCSWRGSGLTQEPGSVGQLALACAEGAVEWLYPAGALRLTLGGPDPRARPGIACLRPVRPFAGAQVFAERAGGALELLLAEGPGPAGGRCVRWGPRERRALFLQATPHQDISRRVAAFRFELREDGRPELPPQAHGLGVDGACRPCSDAELLLAACTSDFVIHGIIHGVTHDVELQESVITVVAARVLRQTPPLFQAGRSGDQGLTSIRTPLRCGVHPGPGTFLFMGWSRFGEARLGCAPRFQEFRRAYEAARAAHLHPCEVALH.

A signal peptide spans 1–23 (MGFPAAALLCALCCGLLAPAARA). Intrachain disulfides connect Cys-30–Cys-51, Cys-82–Cys-118, Cys-171–Cys-242, Cys-174–Cys-266, and Cys-184–Cys-288.

Belongs to the meteorin family. In terms of assembly, monomer.

It localises to the secreted. Involved in both glial cell differentiation and axonal network formation during neurogenesis. Promotes astrocyte differentiation and transforms cerebellar astrocytes into radial glia. Also induces axonal extension in small and intermediate neurons of sensory ganglia by activating nearby satellite glia. This chain is Meteorin (METRN), found in Homo sapiens (Human).